The sequence spans 71 residues: MPVIKVRENESFDVALRRFKRSCEKAGILAEVRAREFYEKPTTIRKRENATLAKRHAKRNARENARNTRLY.

The disordered stretch occupies residues 48–71 (ENATLAKRHAKRNARENARNTRLY). Residues 60–71 (NARENARNTRLY) are compositionally biased toward basic and acidic residues.

The protein belongs to the bacterial ribosomal protein bS21 family.

This Haemophilus influenzae (strain 86-028NP) protein is Small ribosomal subunit protein bS21.